The chain runs to 274 residues: Thiamine kinase (274 aa).

It belongs to the thiamine kinase family.

The enzyme catalyses thiamine + ATP = thiamine phosphate + ADP + H(+). Its pathway is cofactor biosynthesis; thiamine diphosphate biosynthesis; thiamine phosphate from thiamine: step 1/1. Catalyzes the ATP-dependent phosphorylation of thiamine to thiamine phosphate. Is involved in thiamine salvage. The protein is Thiamine kinase of Salmonella paratyphi A (strain ATCC 9150 / SARB42).